Reading from the N-terminus, the 311-residue chain is Aspartate carbamoyltransferase catalytic subunit (311 aa).

Positions 55 and 56 each coordinate carbamoyl phosphate. Position 83 (Lys-83) interacts with L-aspartate. Arg-105, His-133, and Gln-136 together coordinate carbamoyl phosphate. Arg-166 and Arg-220 together coordinate L-aspartate. Positions 261 and 262 each coordinate carbamoyl phosphate.

It belongs to the aspartate/ornithine carbamoyltransferase superfamily. ATCase family. In terms of assembly, heterododecamer (2C3:3R2) of six catalytic PyrB chains organized as two trimers (C3), and six regulatory PyrI chains organized as three dimers (R2).

It carries out the reaction carbamoyl phosphate + L-aspartate = N-carbamoyl-L-aspartate + phosphate + H(+). Its pathway is pyrimidine metabolism; UMP biosynthesis via de novo pathway; (S)-dihydroorotate from bicarbonate: step 2/3. Catalyzes the condensation of carbamoyl phosphate and aspartate to form carbamoyl aspartate and inorganic phosphate, the committed step in the de novo pyrimidine nucleotide biosynthesis pathway. The protein is Aspartate carbamoyltransferase catalytic subunit of Chlorobium chlorochromatii (strain CaD3).